The chain runs to 352 residues: tRNA pseudouridine synthase D (352 aa).

Residue Asp-81 is the Nucleophile of the active site. Positions 158–306 constitute a TRUD domain; the sequence is GVPNYFGQQR…RHERRTLLLK (149 aa).

Belongs to the pseudouridine synthase TruD family.

It carries out the reaction uridine(13) in tRNA = pseudouridine(13) in tRNA. Functionally, responsible for synthesis of pseudouridine from uracil-13 in transfer RNAs. The chain is tRNA pseudouridine synthase D from Photobacterium profundum (strain SS9).